The chain runs to 220 residues: Superoxide dismutase [Fe] (220 aa).

Residues H26, H73, D164, and H168 each coordinate Fe cation.

Belongs to the iron/manganese superoxide dismutase family. As to quaternary structure, homodimer. Fe cation serves as cofactor.

It catalyses the reaction 2 superoxide + 2 H(+) = H2O2 + O2. Destroys superoxide anion radicals which are normally produced within the cells and which are toxic to biological systems. This is Superoxide dismutase [Fe] (sodB) from Campylobacter jejuni subsp. jejuni serotype O:2 (strain ATCC 700819 / NCTC 11168).